The chain runs to 1034 residues: Condensin complex subunit 3 (1034 aa).

7 HEAT repeats span residues 95-132, 139-176, 178-213, 242-279, 281-317, 439-476, and 618-655; these read SPVN…NLPE, DLFD…PSDP, CPVS…SLPK, LTIA…QYSE, DVLD…LVQN, TSLI…PIVT, and DFAR…LFGM. Residues 663–672 show a composition bias toward polar residues; sequence TNPDDSQCKA. The tract at residues 663-693 is disordered; it reads TNPDDSQCKAQENADEDISEQEKPGSVDENL. 3 HEAT repeats span residues 703 to 740, 785 to 823, and 878 to 915; these read ATVN…SGRL, CFAE…DLTR, and ENST…SGRE. Residues 909 to 949 are compositionally biased toward basic and acidic residues; the sequence is QLRSGREEHRVSKETEPQVSKETEDRTNLQENEEGKQKDEA. Positions 909–1034 are disordered; sequence QLRSGREEHR…LSKLLNEEAN (126 aa). Positions 964–984 are enriched in basic residues; sequence RGKATKGRRKGPAAAATRRKA. A compositionally biased stretch (basic and acidic residues) spans 985-999; it reads SKAEEAEAEMERQEE.

It belongs to the CND3 (condensin subunit 3) family. Component of the condensin complex, which contains the XCAP-E/SMC2 and XCAP-C/SMC4 heterodimer, and three non SMC subunits that probably regulate the complex: XCAP-H/NCAPH, XCAP-D2/NCAPD2 and XCAP-G/NCAPG. In terms of processing, phosphorylated by cdk1. Its phosphorylation, as well as that of XCAP-D2 and XCAP-H subunits, activates the condensin complex and is required for chromosome condensation.

The protein resides in the nucleus. It is found in the cytoplasm. The protein localises to the chromosome. In terms of biological role, regulatory subunit of the condensin complex, a complex required for conversion of interphase chromatin into mitotic-like condense chromosomes. The condensin complex probably introduces positive supercoils into relaxed DNA in the presence of type I topoisomerases and converts nicked DNA into positive knotted forms in the presence of type II topoisomerase. In Xenopus laevis (African clawed frog), this protein is Condensin complex subunit 3 (ncapg).